The sequence spans 240 residues: Biosynthetic peptidoglycan transglycosylase (240 aa).

A helical membrane pass occupies residues 15-35 (WMFYLGAVVAIAWLATQAFYF).

Belongs to the glycosyltransferase 51 family.

It is found in the cell inner membrane. It catalyses the reaction [GlcNAc-(1-&gt;4)-Mur2Ac(oyl-L-Ala-gamma-D-Glu-L-Lys-D-Ala-D-Ala)](n)-di-trans,octa-cis-undecaprenyl diphosphate + beta-D-GlcNAc-(1-&gt;4)-Mur2Ac(oyl-L-Ala-gamma-D-Glu-L-Lys-D-Ala-D-Ala)-di-trans,octa-cis-undecaprenyl diphosphate = [GlcNAc-(1-&gt;4)-Mur2Ac(oyl-L-Ala-gamma-D-Glu-L-Lys-D-Ala-D-Ala)](n+1)-di-trans,octa-cis-undecaprenyl diphosphate + di-trans,octa-cis-undecaprenyl diphosphate + H(+). Its pathway is cell wall biogenesis; peptidoglycan biosynthesis. Peptidoglycan polymerase that catalyzes glycan chain elongation from lipid-linked precursors. The sequence is that of Biosynthetic peptidoglycan transglycosylase from Paraburkholderia xenovorans (strain LB400).